The chain runs to 128 residues: Glycine cleavage system H protein (128 aa).

One can recognise a Lipoyl-binding domain in the interval 25-107 (TVRVGITDFA…YEGGWLFEIT (83 aa)). Lysine 66 is subject to N6-lipoyllysine.

It belongs to the GcvH family. In terms of assembly, the glycine cleavage system is composed of four proteins: P, T, L and H. It depends on (R)-lipoate as a cofactor.

In terms of biological role, the glycine cleavage system catalyzes the degradation of glycine. The H protein shuttles the methylamine group of glycine from the P protein to the T protein. This is Glycine cleavage system H protein from Micrococcus luteus (strain ATCC 4698 / DSM 20030 / JCM 1464 / CCM 169 / CCUG 5858 / IAM 1056 / NBRC 3333 / NCIMB 9278 / NCTC 2665 / VKM Ac-2230) (Micrococcus lysodeikticus).